The following is a 193-amino-acid chain: Inner membrane-spanning protein YciB (193 aa).

Transmembrane regions (helical) follow at residues 5–25 (TLDA…FYIY), 36–56 (IIAA…LMFV), 67–87 (WLVV…QDDF), 93–113 (APII…FLGG), 138–158 (VWVG…FVWV), and 164–184 (FTAF…FWFL).

The protein belongs to the YciB family.

Its subcellular location is the cell inner membrane. Its function is as follows. Plays a role in cell envelope biogenesis, maintenance of cell envelope integrity and membrane homeostasis. The polypeptide is Inner membrane-spanning protein YciB (Vitreoscilla sp. (strain C1)).